The following is a 78-amino-acid chain: Ferredoxin (78 aa).

4Fe-4S ferredoxin-type domains lie at 2-29 (FVIT…HEGP) and 30-59 (DQYY…QEEF). [3Fe-4S] cluster-binding residues include C8 and C16. [4Fe-4S] cluster-binding residues include C20, C39, C42, and C45. Residue C49 participates in [3Fe-4S] cluster binding.

The cofactor is [3Fe-4S] cluster. Requires [4Fe-4S] cluster as cofactor.

Its function is as follows. Ferredoxins are iron-sulfur proteins that transfer electrons in a wide variety of metabolic reactions. The protein is Ferredoxin of Alicyclobacillus acidocaldarius subsp. acidocaldarius (Bacillus acidocaldarius).